A 651-amino-acid polypeptide reads, in one-letter code: Chaperone protein dnaK1 (651 aa).

At threonine 197 the chain carries Phosphothreonine; by autocatalysis.

It belongs to the heat shock protein 70 family.

In terms of biological role, acts as a chaperone. In Thermosynechococcus vestitus (strain NIES-2133 / IAM M-273 / BP-1), this protein is Chaperone protein dnaK1 (dnaK1).